The primary structure comprises 354 residues: NADH-quinone oxidoreductase subunit H (354 aa).

8 helical membrane-spanning segments follow: residues 25-45 (LVRI…LILW), 91-111 (WIYL…WAVI), 126-146 (LLYA…AGWA), 170-190 (MGFA…SGIV), 205-225 (FLSW…ISGI), 267-287 (IVIS…PFGF), 290-310 (FVPG…VFIW), and 330-350 (IFIP…MSPL).

The protein belongs to the complex I subunit 1 family. NDH-1 is composed of 14 different subunits. Subunits NuoA, H, J, K, L, M, N constitute the membrane sector of the complex.

The protein resides in the cell inner membrane. The enzyme catalyses a quinone + NADH + 5 H(+)(in) = a quinol + NAD(+) + 4 H(+)(out). NDH-1 shuttles electrons from NADH, via FMN and iron-sulfur (Fe-S) centers, to quinones in the respiratory chain. The immediate electron acceptor for the enzyme in this species is believed to be ubiquinone. Couples the redox reaction to proton translocation (for every two electrons transferred, four hydrogen ions are translocated across the cytoplasmic membrane), and thus conserves the redox energy in a proton gradient. This subunit may bind ubiquinone. The sequence is that of NADH-quinone oxidoreductase subunit H from Paraburkholderia phytofirmans (strain DSM 17436 / LMG 22146 / PsJN) (Burkholderia phytofirmans).